The primary structure comprises 290 residues: GTPase Era (290 aa).

The Era-type G domain maps to 2–167; sequence KSGFVSIVGR…LDELVKYLPE (166 aa). The segment at 10–17 is G1; sequence GRTNAGKS. 10–17 lines the GTP pocket; the sequence is GRTNAGKS. The tract at residues 36 to 40 is G2; sequence NATRR. The tract at residues 57–60 is G3; the sequence is DTPG. GTP-binding positions include 57 to 61 and 116 to 119; these read DTPGL and NKVD. The G4 stretch occupies residues 116-119; the sequence is NKVD. Residues 146-148 are G5; the sequence is YSI. Residues 194–274 enclose the KH type-2 domain; the sequence is IYENLSDEIP…MLKLFVQLEK (81 aa).

The protein belongs to the TRAFAC class TrmE-Era-EngA-EngB-Septin-like GTPase superfamily. Era GTPase family. In terms of assembly, monomer.

The protein localises to the cytoplasm. Its subcellular location is the cell inner membrane. An essential GTPase that binds both GDP and GTP, with rapid nucleotide exchange. Plays a role in 16S rRNA processing and 30S ribosomal subunit biogenesis and possibly also in cell cycle regulation and energy metabolism. In Campylobacter lari (strain RM2100 / D67 / ATCC BAA-1060), this protein is GTPase Era.